The chain runs to 201 residues: Small ribosomal subunit protein uS2 (201 aa).

Belongs to the universal ribosomal protein uS2 family. In terms of assembly, part of the 50S ribosomal subunit.

The protein is Small ribosomal subunit protein uS2 of Thermococcus kodakarensis (strain ATCC BAA-918 / JCM 12380 / KOD1) (Pyrococcus kodakaraensis (strain KOD1)).